An 89-amino-acid polypeptide reads, in one-letter code: Small ribosomal subunit protein bS16 (89 aa).

It belongs to the bacterial ribosomal protein bS16 family.

This Chloroflexus aggregans (strain MD-66 / DSM 9485) protein is Small ribosomal subunit protein bS16.